Reading from the N-terminus, the 292-residue chain is uncharacterized protein (292 aa).

The HTH lysR-type domain occupies 1–59 (MTITQLKVFVKIAETGSFTKAGQALNMTQPAVSHAISAIEAELDVKLIIRDRRNGLMLT). Residues 18-37 (FTKAGQALNMTQPAVSHAIS) constitute a DNA-binding region (H-T-H motif).

The protein belongs to the LysR transcriptional regulatory family.

This is an uncharacterized protein from Bacillus subtilis (strain 168).